Reading from the N-terminus, the 204-residue chain is Nucleoside triphosphate pyrophosphatase (204 aa).

The Proton acceptor role is filled by aspartate 79.

The protein belongs to the Maf family. A divalent metal cation is required as a cofactor.

It is found in the cytoplasm. It catalyses the reaction a ribonucleoside 5'-triphosphate + H2O = a ribonucleoside 5'-phosphate + diphosphate + H(+). The enzyme catalyses a 2'-deoxyribonucleoside 5'-triphosphate + H2O = a 2'-deoxyribonucleoside 5'-phosphate + diphosphate + H(+). Nucleoside triphosphate pyrophosphatase. May have a dual role in cell division arrest and in preventing the incorporation of modified nucleotides into cellular nucleic acids. The chain is Nucleoside triphosphate pyrophosphatase from Trichodesmium erythraeum (strain IMS101).